We begin with the raw amino-acid sequence, 415 residues long: UDP-N-acetylmuramoylalanine--D-glutamate ligase (415 aa).

91–97 (GTDGKST) contributes to the ATP binding site.

It belongs to the MurCDEF family.

The protein localises to the cytoplasm. The enzyme catalyses UDP-N-acetyl-alpha-D-muramoyl-L-alanine + D-glutamate + ATP = UDP-N-acetyl-alpha-D-muramoyl-L-alanyl-D-glutamate + ADP + phosphate + H(+). The protein operates within cell wall biogenesis; peptidoglycan biosynthesis. Functionally, cell wall formation. Catalyzes the addition of glutamate to the nucleotide precursor UDP-N-acetylmuramoyl-L-alanine (UMA). This is UDP-N-acetylmuramoylalanine--D-glutamate ligase from Aquifex aeolicus (strain VF5).